A 274-amino-acid chain; its full sequence is MKVIKTLSIINFFIFVTFNIKNESKYSNTFINNAYNMSIRRSMAESKPPTGTGASGSAGSGAGASGSAGSGDGAVASARNGANPGADAEGSSSTPATTTTTTTTTTTTTTNDAEASTSTSSENPNHNNAETNPKGKGEVQKSNQANKETQNNSNVQQDSQTKSNVPPTQDADTKSPTAQPEQAENSAPTAEQTESPELQSAPENKGTGQHGHMHGSRNNHPQNTSDSQKECTDGNKENCGAVTSLLSNSSNIASINKFVVLISAKLVLSFAIFI.

An N-terminal signal peptide occupies residues 1-20 (MKVIKTLSIINFFIFVTFNI). N-linked (GlcNAc...) asparagine glycosylation is found at N22 and N36. Residues 43 to 234 (MAESKPPTGT…SDSQKECTDG (192 aa)) form a disordered region. The segment at 44 to 200 (AESKPPTGTG…EQTESPELQS (157 aa)) is polymorphic region. 2 tandem repeats follow at residues 53 to 62 (GASGSAGSGA) and 63 to 72 (GASGSAGSGD). The interval 53 to 72 (GASGSAGSGAGASGSAGSGD) is 2 X 10 AA tandem repeats of G-A-S-G-S-A-G-S-G-[AD]. Residues 53 to 72 (GASGSAGSGAGASGSAGSGD) show a composition bias toward gly residues. Residues 91 to 121 (SSSTPATTTTTTTTTTTTTTNDAEASTSTSS) show a composition bias toward low complexity. Composition is skewed to polar residues over residues 122 to 131 (ENPNHNNAET), 140 to 167 (QKSNQANKETQNNSNVQQDSQTKSNVPP), and 174 to 202 (KSPTAQPEQAENSAPTAEQTESPELQSAP). N-linked (GlcNAc...) asparagine glycosylation is present at N151. N223 is a glycosylation site (N-linked (GlcNAc...) asparagine). C231 and C239 form a disulfide bridge. N-linked (GlcNAc...) asparagine glycosylation occurs at N248. N248 carries the GPI-anchor amidated asparagine lipid modification. The propeptide at 249-274 (SSNIASINKFVVLISAKLVLSFAIFI) is removed in mature form.

It localises to the cell membrane. Its function is as follows. May play a role in the merozoite attachment to the erythrocyte. The sequence is that of Merozoite surface protein 2 from Plasmodium falciparum (isolate kf1916).